The following is a 125-amino-acid chain: MALDIERIKEELSQATVLELKQLIDALKEAWGVTAAAPVAVAAAPAAGAAAAPAEEKTEFDVILKEAGAKKLEVIKELRAITGLGLKEAKDLAEKGGPVKEGVSKQEAEEIKKKLEAVGAVVELK.

This sequence belongs to the bacterial ribosomal protein bL12 family. In terms of assembly, homodimer. Part of the ribosomal stalk of the 50S ribosomal subunit. Forms a multimeric L10(L12)X complex, where L10 forms an elongated spine to which 2 to 4 L12 dimers bind in a sequential fashion. Binds GTP-bound translation factors.

Forms part of the ribosomal stalk which helps the ribosome interact with GTP-bound translation factors. Is thus essential for accurate translation. This Thermus thermophilus (strain ATCC BAA-163 / DSM 7039 / HB27) protein is Large ribosomal subunit protein bL12.